Reading from the N-terminus, the 407-residue chain is Argininosuccinate synthase (407 aa).

ATP-binding positions include 16 to 24 (AYSGGLDTS) and Ala-44. Residues Tyr-96 and Ser-101 each coordinate L-citrulline. Gly-126 contributes to the ATP binding site. Thr-128, Asn-132, and Asp-133 together coordinate L-aspartate. Asn-132 is an L-citrulline binding site. The L-citrulline site is built by Arg-136, Ser-185, Ser-194, Glu-270, and Tyr-282.

This sequence belongs to the argininosuccinate synthase family. Type 1 subfamily. As to quaternary structure, homotetramer.

The protein resides in the cytoplasm. The catalysed reaction is L-citrulline + L-aspartate + ATP = 2-(N(omega)-L-arginino)succinate + AMP + diphosphate + H(+). It functions in the pathway amino-acid biosynthesis; L-arginine biosynthesis; L-arginine from L-ornithine and carbamoyl phosphate: step 2/3. This is Argininosuccinate synthase from Shewanella amazonensis (strain ATCC BAA-1098 / SB2B).